We begin with the raw amino-acid sequence, 1486 residues long: Chromosome partition protein MukB (1486 aa).

34-41 (GGNGAGKS) is an ATP binding site. 3 coiled-coil regions span residues 326 to 418 (LEAD…QYNQ), 444 to 480 (LETFQAKELEATEKMLSLEQKMSMAQTAHSQFEQAYQ), and 509 to 603 (RHLA…RAPV). A flexible hinge region spans residues 666–783 (PGGSEDQRLN…EVPLFGRAAR (118 aa)). 3 coiled-coil regions span residues 835-923 (EAEI…AKLE), 977-1115 (EMLS…TAKA), and 1209-1266 (VEAI…QNVS).

This sequence belongs to the SMC family. MukB subfamily. In terms of assembly, homodimerization via its hinge domain. Binds to DNA via its C-terminal region. Interacts, and probably forms a ternary complex, with MukE and MukF via its C-terminal region. The complex formation is stimulated by calcium or magnesium. Interacts with tubulin-related protein FtsZ.

It is found in the cytoplasm. The protein resides in the nucleoid. Functionally, plays a central role in chromosome condensation, segregation and cell cycle progression. Functions as a homodimer, which is essential for chromosome partition. Involved in negative DNA supercoiling in vivo, and by this means organize and compact chromosomes. May achieve or facilitate chromosome segregation by condensation DNA from both sides of a centrally located replisome during cell division. This is Chromosome partition protein MukB from Escherichia coli (strain SMS-3-5 / SECEC).